The following is a 65-amino-acid chain: Small ribosomal subunit protein eS27 (65 aa).

Zn(2+) contacts are provided by cysteine 20, cysteine 23, cysteine 39, and cysteine 42. Residues cysteine 20 to cysteine 42 form a C4-type zinc finger.

This sequence belongs to the eukaryotic ribosomal protein eS27 family. In terms of assembly, part of the 30S ribosomal subunit. Requires Zn(2+) as cofactor.

The chain is Small ribosomal subunit protein eS27 from Pyrococcus abyssi (strain GE5 / Orsay).